Reading from the N-terminus, the 482-residue chain is 7-deoxyloganetic acid glucosyl transferase (482 aa).

The active-site Proton acceptor is histidine 22. Histidine 22 contacts an anthocyanidin. Residue aspartate 127 is the Charge relay of the active site. 8 residues coordinate UDP-alpha-D-glucose: threonine 149, alanine 362, glutamine 364, histidine 379, tryptophan 382, asparagine 383, serine 384, and glutamate 387. Position 402 (alanine 402) interacts with an anthocyanidin. 2 residues coordinate UDP-alpha-D-glucose: aspartate 403 and glutamine 404.

It belongs to the UDP-glycosyltransferase family. Expressed in the leaf internal phloem-associated parenchyma (IPAP) inside the mesophyll. Mostly observed in leaves, roots and stems, and, to a lower extent, in flowers.

The protein localises to the nucleus. It localises to the cytoplasm. The protein resides in the cytosol. It carries out the reaction 7-deoxyloganetate + UDP-alpha-D-glucose = 7-deoxyloganate + UDP + H(+). Its pathway is alkaloid biosynthesis. Functionally, component of the seco-iridoid and derivatives monoterpenoid indole alkaloids (MIAs, e.g. vincristine, quinine, and strychnine) biosynthesis pathway. Catalyzes the glucosylation of 7-deoxyloganetic acid to form 7-deoxyloganic acid using UDP-glucose as the sugar donor. Inactive with loganetic acid, loganetin, iridodial, iridotrial, 8-OH-geraniol, jasmonic acid, gibberellic acid, indole acetic acid, salicylic acid, abscisic acid, zeatin and luteolin. The chain is 7-deoxyloganetic acid glucosyl transferase from Catharanthus roseus (Madagascar periwinkle).